The sequence spans 108 residues: Parvalbumin beta (108 aa).

EF-hand domains are found at residues 38–73 (KPTD…FCSS) and 77–108 (LSNA…LVRS). 11 residues coordinate Ca(2+): D51, D53, S55, Y57, E59, E62, D90, D92, D94, K96, and E101.

This sequence belongs to the parvalbumin family.

In terms of biological role, in muscle, parvalbumin is thought to be involved in relaxation after contraction. It binds two calcium ions. The protein is Parvalbumin beta of Amphiuma means (Salamander).